The following is a 316-amino-acid chain: Porphobilinogen deaminase (316 aa).

C245 is modified (S-(dipyrrolylmethanemethyl)cysteine).

The protein belongs to the HMBS family. In terms of assembly, monomer. Dipyrromethane serves as cofactor.

The enzyme catalyses 4 porphobilinogen + H2O = hydroxymethylbilane + 4 NH4(+). It functions in the pathway porphyrin-containing compound metabolism; protoporphyrin-IX biosynthesis; coproporphyrinogen-III from 5-aminolevulinate: step 2/4. It participates in porphyrin-containing compound metabolism; chlorophyll biosynthesis. Tetrapolymerization of the monopyrrole PBG into the hydroxymethylbilane pre-uroporphyrinogen in several discrete steps. The polypeptide is Porphobilinogen deaminase (Prochlorococcus marinus subsp. pastoris (strain CCMP1986 / NIES-2087 / MED4)).